A 156-amino-acid polypeptide reads, in one-letter code: Zinc metalloproteinase-disintegrin jararin (156 aa).

Residues 1–67 (FVANRMAHEL…NYYGCLLNEP (67 aa)) form the Peptidase M12B domain. Position 8 (H8) interacts with Zn(2+). E9 is a catalytic residue. H12 is a Zn(2+) binding site. 9 cysteine pairs are disulfide-bonded: C23–C47, C25–C30, C78–C97, C89–C107, C91–C102, C101–C124, C115–C121, C120–C145, and C133–C152. The Disintegrin domain occupies 75–156 (PPFCGNYYPE…GQSGDCPRNS (82 aa)). A compositionally biased stretch (basic and acidic residues) spans 136 to 145 (GRGDNPDDRC). A disordered region spans residues 136–156 (GRGDNPDDRCTGQSGDCPRNS). Positions 137–139 (RGD) match the Cell attachment site motif. A compositionally biased stretch (polar residues) spans 146–156 (TGQSGDCPRNS).

The protein belongs to the venom metalloproteinase (M12B) family. P-II subfamily. P-IIb sub-subfamily. As to quaternary structure, monomer. Zn(2+) serves as cofactor. Expressed by the venom gland.

The protein resides in the secreted. Its function is as follows. Snake venom zinc metalloproteinase that inhibits ADP-induced platelet aggregation (probably by binding integrin alpha-IIb/beta-3 (ITGA2B/ITGB3)) and degrades fibrinogen. The polypeptide is Zinc metalloproteinase-disintegrin jararin (Bothrops jararaca (Jararaca)).